The primary structure comprises 206 residues: Thiamine-phosphate synthase (206 aa).

4-amino-2-methyl-5-(diphosphooxymethyl)pyrimidine-binding positions include 36–40 (QLRAK) and Asn-68. Residues Asp-69 and Asp-88 each coordinate Mg(2+). Ser-105 serves as a coordination point for 4-amino-2-methyl-5-(diphosphooxymethyl)pyrimidine. 131 to 133 (TPT) lines the 2-[(2R,5Z)-2-carboxy-4-methylthiazol-5(2H)-ylidene]ethyl phosphate pocket. Lys-134 is a binding site for 4-amino-2-methyl-5-(diphosphooxymethyl)pyrimidine. Residue Gly-162 participates in 2-[(2R,5Z)-2-carboxy-4-methylthiazol-5(2H)-ylidene]ethyl phosphate binding.

It belongs to the thiamine-phosphate synthase family. Mg(2+) is required as a cofactor.

The enzyme catalyses 2-[(2R,5Z)-2-carboxy-4-methylthiazol-5(2H)-ylidene]ethyl phosphate + 4-amino-2-methyl-5-(diphosphooxymethyl)pyrimidine + 2 H(+) = thiamine phosphate + CO2 + diphosphate. The catalysed reaction is 2-(2-carboxy-4-methylthiazol-5-yl)ethyl phosphate + 4-amino-2-methyl-5-(diphosphooxymethyl)pyrimidine + 2 H(+) = thiamine phosphate + CO2 + diphosphate. It carries out the reaction 4-methyl-5-(2-phosphooxyethyl)-thiazole + 4-amino-2-methyl-5-(diphosphooxymethyl)pyrimidine + H(+) = thiamine phosphate + diphosphate. Its pathway is cofactor biosynthesis; thiamine diphosphate biosynthesis; thiamine phosphate from 4-amino-2-methyl-5-diphosphomethylpyrimidine and 4-methyl-5-(2-phosphoethyl)-thiazole: step 1/1. Functionally, condenses 4-methyl-5-(beta-hydroxyethyl)thiazole monophosphate (THZ-P) and 2-methyl-4-amino-5-hydroxymethyl pyrimidine pyrophosphate (HMP-PP) to form thiamine monophosphate (TMP). This chain is Thiamine-phosphate synthase, found in Thermus thermophilus (strain ATCC BAA-163 / DSM 7039 / HB27).